The following is a 93-amino-acid chain: Insertion element ISR1 uncharacterized 11 kDa protein A1 (93 aa).

Disordered stretches follow at residues 14–33 (RRAR…QERR) and 68–93 (RRRA…SAGR).

In Rhizobium sp, this protein is Insertion element ISR1 uncharacterized 11 kDa protein A1.